We begin with the raw amino-acid sequence, 341 residues long: Elongation factor Ts (341 aa).

The segment at 80–83 is involved in Mg(2+) ion dislocation from EF-Tu; it reads TDFV.

Belongs to the EF-Ts family.

It is found in the cytoplasm. In terms of biological role, associates with the EF-Tu.GDP complex and induces the exchange of GDP to GTP. It remains bound to the aminoacyl-tRNA.EF-Tu.GTP complex up to the GTP hydrolysis stage on the ribosome. This Lactobacillus johnsonii (strain CNCM I-12250 / La1 / NCC 533) protein is Elongation factor Ts.